A 474-amino-acid chain; its full sequence is Ribulose bisphosphate carboxylase large chain (474 aa).

Residue proline 2 is modified to N-acetylproline. Position 13 is an N6,N6,N6-trimethyllysine (lysine 13). Residues asparagine 122 and threonine 172 each contribute to the substrate site. The active-site Proton acceptor is lysine 174. Residue lysine 176 coordinates substrate. Mg(2+)-binding residues include lysine 200, aspartate 202, and glutamate 203. Lysine 200 carries the N6-carboxylysine modification. Histidine 293 serves as the catalytic Proton acceptor. Residues arginine 294, histidine 326, and serine 378 each contribute to the substrate site.

It belongs to the RuBisCO large chain family. Type I subfamily. In terms of assembly, heterohexadecamer of 8 large chains and 8 small chains; disulfide-linked. The disulfide link is formed within the large subunit homodimers. Mg(2+) is required as a cofactor. Post-translationally, the disulfide bond which can form in the large chain dimeric partners within the hexadecamer appears to be associated with oxidative stress and protein turnover.

Its subcellular location is the plastid. The protein localises to the chloroplast. The catalysed reaction is 2 (2R)-3-phosphoglycerate + 2 H(+) = D-ribulose 1,5-bisphosphate + CO2 + H2O. It carries out the reaction D-ribulose 1,5-bisphosphate + O2 = 2-phosphoglycolate + (2R)-3-phosphoglycerate + 2 H(+). RuBisCO catalyzes two reactions: the carboxylation of D-ribulose 1,5-bisphosphate, the primary event in carbon dioxide fixation, as well as the oxidative fragmentation of the pentose substrate in the photorespiration process. Both reactions occur simultaneously and in competition at the same active site. The chain is Ribulose bisphosphate carboxylase large chain from Oltmannsiellopsis viridis (Marine flagellate).